The chain runs to 113 residues: WRMVYDNNVNTIVMLTKAREGNEEQSAIYWPSDIGEQMNMKSITVTLVSDETDGPALKRKLKIERGAISRTVTQLHYTGWNSTSCPEDGRDVIELVNKMQENIRSTGDGVALI.

Positions 1 to 113 constitute a Tyrosine-protein phosphatase domain; the sequence is WRMVYDNNVN…RSTGDGVALI (113 aa).

The protein belongs to the protein-tyrosine phosphatase family.

The enzyme catalyses O-phospho-L-tyrosyl-[protein] + H2O = L-tyrosyl-[protein] + phosphate. In Styela plicata (Wrinkled sea squirt), this protein is Tyrosine-protein phosphatase 15 (STY-15).